The chain runs to 243 residues: PF03932 family protein CutC (243 aa).

The protein belongs to the CutC family.

It localises to the cytoplasm. The polypeptide is PF03932 family protein CutC (Histophilus somni (strain 2336) (Haemophilus somnus)).